Consider the following 310-residue polypeptide: HMG box-containing protein C28F2.11 (310 aa).

Residues 69-95 are compositionally biased toward low complexity; it reads ESPSKKATSPKKATPAAVAPVEATSAV. A disordered region spans residues 69–310; the sequence is ESPSKKATSP…TTPPTAKVAN (242 aa). Ser70 is modified (phosphoserine). Thr105 is modified (phosphothreonine). The HMG box DNA-binding region spans 117–187; the sequence is PKRPPSAYNL…AYEEEMAAYN (71 aa). 2 stretches are compositionally biased toward basic and acidic residues: residues 131-178 and 200-226; these read QRSE…LREA and VTAE…DFSE. 3 positions are modified to phosphoserine: Ser161, Ser214, and Ser215. Phosphothreonine occurs at positions 217 and 237. Residues 255-268 are compositionally biased toward polar residues; it reads STVPTSNVEPVSQP. A phosphoserine mark is found at Ser271, Ser278, Ser294, Ser295, and Ser297. 2 positions are modified to phosphothreonine: Thr302 and Thr305.

It is found in the cytoplasm. The polypeptide is HMG box-containing protein C28F2.11 (Schizosaccharomyces pombe (strain 972 / ATCC 24843) (Fission yeast)).